We begin with the raw amino-acid sequence, 125 residues long: SKKEDSCQLDHAQGPCLGMISRYFYNGTSMACETFQYGGCLGNGNNFASQKECLQTCRTVAACNLPIVQGPCRAFIRLWAFDAAQGKCVLFTYGGCRGNGNKFYSQKECKEYCGIPGDGDEELLR.

BPTI/Kunitz inhibitor domains lie at 7–57 and 63–113; these read CQLD…LQTC and CNLP…KEYC. 6 disulfide bridges follow: Cys-7–Cys-57, Cys-16–Cys-40, Cys-32–Cys-53, Cys-63–Cys-113, Cys-72–Cys-96, and Cys-88–Cys-109. Asn-26 is a glycosylation site (N-linked (GlcNAc...) asparagine).

It localises to the secreted. This inhibitory fragment, released from native ITI after limited proteolysis with trypsin, contains two homologous domains. Whereas the second domain is a strong inhibitor of trypsin, the first domain interacts weakly with PMN-granulocytic elastase and not at all with pancreatic elastase. This Equus caballus (Horse) protein is Inter-alpha-trypsin inhibitor.